The sequence spans 197 residues: Casparian strip membrane protein 4 (197 aa).

Residues 1–34 are Cytoplasmic-facing; sequence MMSSTTIDVPAESSNVAKGKAVLVAAPRPGGWKK. Residues 35-55 traverse the membrane as a helical segment; sequence GIAIVDFVLRLGAVAAALGAA. At 56 to 85 the chain is on the extracellular side; the sequence is TTMATADQTLPFFTQFFQFEASYDSFTTFQ. A helical transmembrane segment spans residues 86 to 106; it reads FFVITMALVGCYLVLSLPLSI. At 107 to 118 the chain is on the cytoplasmic side; that stretch reads VSIIRPHALGPK. Residues 119-139 form a helical membrane-spanning segment; that stretch reads LFLIILDTVFLTLATASAASA. Residues 140-171 lie on the Extracellular side of the membrane; it reads AAVVYVAHNGNQDSNWLAICNQFGDFCAQTSG. Residues 172-192 traverse the membrane as a helical segment; that stretch reads AVVSSLVAVVVFVLLIVMSAL. Topologically, residues 193 to 197 are cytoplasmic; that stretch reads ALGKH.

The protein belongs to the Casparian strip membrane proteins (CASP) family. Homodimer and heterodimers.

The protein resides in the cell membrane. Regulates membrane-cell wall junctions and localized cell wall deposition. Required for establishment of the Casparian strip membrane domain (CSD) and the subsequent formation of Casparian strips, a cell wall modification of the root endodermis that determines an apoplastic barrier between the intraorganismal apoplasm and the extraorganismal apoplasm and prevents lateral diffusion. The polypeptide is Casparian strip membrane protein 4 (Lotus japonicus (Lotus corniculatus var. japonicus)).